Consider the following 588-residue polypeptide: Protein kinase C iota type (588 aa).

The region spanning 18-101 (QVRVKAYYRG…SELIIHVFPC (84 aa)) is the PB1 domain. A Phorbol-ester/DAG-type zinc finger spans residues 133–183 (GHAFQAKRFNRRAHCAICTDRIWGLGRQGYKCINCKLLVHKKCHKLVTVEC). The tract at residues 194 to 213 (GRIDPGSTHPEHPDQVLGKK) is disordered. Positions 246 to 514 (FDLLRVIGRG…FADIMAHPFF (269 aa)) constitute a Protein kinase domain. ATP-binding positions include 252 to 260 (IGRGSYAKV) and Lys275. The active-site Proton acceptor is the Asp370. A phosphothreonine mark is found at Thr404 and Thr556. The region spanning 515-586 (RNVDWDLMEQ…INPLLMSAEE (72 aa)) is the AGC-kinase C-terminal domain.

The protein belongs to the protein kinase superfamily. AGC Ser/Thr protein kinase family. PKC subfamily.

The enzyme catalyses L-seryl-[protein] + ATP = O-phospho-L-seryl-[protein] + ADP + H(+). It carries out the reaction L-threonyl-[protein] + ATP = O-phospho-L-threonyl-[protein] + ADP + H(+). With respect to regulation, exhibits an elevated basal enzymatic activity and is not regulated by diacylglycerol, phosphatidylserine, phorbol esters or calcium ions. Two specific sites, Thr-404 (activation loop of the kinase domain) and Thr-556 (turn motif), need to be phosphorylated for its full activation. In terms of biological role, calcium- and diacylglycerol-independent serine/ threonine-protein kinase that plays a general protective role against apoptotic stimuli, is involved in NF-kappa-B activation, cell survival, differentiation and polarity, and contributes to the regulation of microtubule dynamics in the early secretory pathway. Is required for the formation and maintenance of the zonula adherens during early epithelial development and plays a critical role in organ morphogenesis and in regulating the orientation of cell division. Required for polarized epithelial organization, myocardium coherence and cell connectivity in the early somite stages. Required for heart cone tilt and development of circulatory architecture during embryogenesis. The polypeptide is Protein kinase C iota type (prkci) (Danio rerio (Zebrafish)).